The sequence spans 197 residues: RNA pyrophosphohydrolase (197 aa).

A Nudix hydrolase domain is found at 6 to 149 (GYRPNVGIVI…KRDVYRKAMK (144 aa)). Residues 38-59 (GGINDGETPEQAMYRELYEEVG) carry the Nudix box motif. Residues 165 to 197 (LSTNNNDEKKANYSAKKPYSPYRNQDKKRKTRV) form a disordered region.

The protein belongs to the Nudix hydrolase family. RppH subfamily. A divalent metal cation is required as a cofactor.

Accelerates the degradation of transcripts by removing pyrophosphate from the 5'-end of triphosphorylated RNA, leading to a more labile monophosphorylated state that can stimulate subsequent ribonuclease cleavage. The polypeptide is RNA pyrophosphohydrolase (Mannheimia succiniciproducens (strain KCTC 0769BP / MBEL55E)).